The chain runs to 593 residues: Gamma-humulene synthase (593 aa).

The span at 1 to 26 (MAQISESVSPSTDLKSTESSITSNRH) shows a compositional bias: polar residues. Residues 1 to 34 (MAQISESVSPSTDLKSTESSITSNRHGNMWEDDR) are disordered. Mg(2+) is bound by residues Asp343, Asp347, Asp488, and Glu496. A DDXXD motif motif is present at residues 343–347 (DDLYD).

Belongs to the terpene synthase family. Tpsd subfamily. The cofactor is Mg(2+). K(+) is required as a cofactor.

It localises to the cytoplasm. The enzyme catalyses (2E,6E)-farnesyl diphosphate = gamma-humulene + diphosphate. It catalyses the reaction (2E,6E)-farnesyl diphosphate = sibirene + diphosphate. The catalysed reaction is (2E,6E)-farnesyl diphosphate = longifolene + diphosphate. It carries out the reaction (2E,6E)-farnesyl diphosphate = beta-himachalene + diphosphate. The enzyme catalyses (2E,6E)-farnesyl diphosphate = gamma-himachalene + diphosphate. It catalyses the reaction (2E,6E)-farnesyl diphosphate = alpha-himachalene + diphosphate. It participates in terpene metabolism; oleoresin biosynthesis. Functionally, involved in defensive oleoresin formation in conifers in response to insect attack or other injury. Involved in 52 sesquiterpene (C15) olefins biosynthesis. The polypeptide is Gamma-humulene synthase (ag5) (Abies grandis (Grand fir)).